Here is a 1992-residue protein sequence, read N- to C-terminus: E3 ubiquitin-protein ligase TRIP12 (1992 aa).

A compositionally biased stretch (polar residues) spans M1–G10. The tract at residues M1–E398 is disordered. At S2 the chain carries N-acetylserine. S12 carries the phosphoserine modification. Over residues R18–D27 the composition is skewed to polar residues. The segment covering S29–V43 has biased composition (low complexity). Over residues D48 to R70 the composition is skewed to basic and acidic residues. Phosphoserine occurs at positions 77, 85, and 100. The segment covering P78 to S88 has biased composition (polar residues). A compositionally biased stretch (polar residues) spans S154–E164. Low complexity-rich tracts occupy residues P175–A188 and S196–A215. The residue at position 181 (K181) is an N6-acetyllysine. Positions P280–P290 are enriched in polar residues. Phosphoserine is present on residues S310 and S312. A compositionally biased stretch (low complexity) spans G330–G339. Positions G346 to D358 are enriched in basic and acidic residues. Over residues N362–A371 the composition is skewed to polar residues. The region spanning M749–K836 is the WWE domain. The interval S938–S1044 is disordered. S942 is subject to Phosphoserine. A compositionally biased stretch (polar residues) spans T948–V960. Positions N961–A973 are enriched in low complexity. 2 positions are modified to phosphoserine: S991 and S997. Residues K1001–K1014 are compositionally biased toward basic residues. Phosphoserine is present on S1016. A compositionally biased stretch (basic and acidic residues) spans P1017 to N1026. Residues K1029–S1040 are compositionally biased toward low complexity. Residues S1030, S1317, S1322, S1329, and S1376 each carry the phosphoserine modification. T1377 carries the phosphothreonine modification. Disordered regions lie at residues S1407–H1434 and T1568–D1587. K1425 is modified (N6-acetyllysine). S1427 bears the Phosphoserine mark. Positions E1496–P1570 are K-box. Positions P1885 to S1992 constitute an HECT domain. Residue C1959 is the Glycyl thioester intermediate of the active site.

Belongs to the UPL family. K-HECT subfamily. In terms of assembly, interacts with MYC; leading to disrupt interaction with isoform p19ARF/ARF of CDKN2A. Interacts with TRADD; leading to disrupt interaction with isoform p19ARF/ARF of CDKN2A. Interacts with SMARCC1; leading to disrupt interaction with SMARCE1.

It is found in the nucleus. Its subcellular location is the nucleoplasm. It catalyses the reaction S-ubiquitinyl-[E2 ubiquitin-conjugating enzyme]-L-cysteine + [acceptor protein]-L-lysine = [E2 ubiquitin-conjugating enzyme]-L-cysteine + N(6)-ubiquitinyl-[acceptor protein]-L-lysine.. It participates in protein modification; protein ubiquitination. In terms of biological role, E3 ubiquitin-protein ligase involved in ubiquitin fusion degradation (UFD) pathway and regulation of DNA repair. Part of the ubiquitin fusion degradation (UFD) pathway, a process that mediates ubiquitination of protein at their N-terminus, regardless of the presence of lysine residues in target proteins. Acts as a key regulator of DNA damage response by acting as a suppressor of RNF168, an E3 ubiquitin-protein ligase that promotes accumulation of 'Lys-63'-linked histone H2A and H2AX at DNA damage sites, thereby acting as a guard against excessive spreading of ubiquitinated chromatin at damaged chromosomes. In normal cells, mediates ubiquitination and degradation of isoform p19ARF/ARF of CDKN2A, a lysine-less tumor suppressor required for p53/TP53 activation under oncogenic stress. In cancer cells, however, isoform p19ARF/ARF and TRIP12 are located in different cell compartments, preventing isoform p19ARF/ARF ubiquitination and degradation. Does not mediate ubiquitination of isoform p16-INK4a of CDKN2A. Also catalyzes ubiquitination of NAE1 and SMARCE1, leading to their degradation. Ubiquitination and degradation of target proteins is regulated by interaction with proteins such as MYC, TRADD or SMARCC1, which disrupt the interaction between TRIP12 and target proteins. Mediates ubiquitination of ASXL1: following binding to N(6)-methyladenosine methylated DNA, ASXL1 is ubiquitinated by TRIP12, leading to its degradation and subsequent inactivation of the PR-DUB complex. This chain is E3 ubiquitin-protein ligase TRIP12 (TRIP12), found in Bos taurus (Bovine).